The following is a 258-amino-acid chain: Snake venom serine protease PA (258 aa).

A signal peptide spans 1–18; it reads MVLIRVLANLLILQLSYA. A propeptide spanning residues 19-24 is cleaved from the precursor; that stretch reads QKSPEL. In terms of domain architecture, Peptidase S1 spans 25 to 249; it reads VVGGDECNIN…YNDWIKSIIA (225 aa). Cystine bridges form between cysteine 31/cysteine 163, cysteine 50/cysteine 66, cysteine 98/cysteine 256, cysteine 142/cysteine 210, cysteine 174/cysteine 189, and cysteine 200/cysteine 225. N-linked (GlcNAc...) asparagine glycosylation occurs at asparagine 44. Catalysis depends on charge relay system residues histidine 65 and aspartate 110. The active-site Charge relay system is serine 204.

This sequence belongs to the peptidase S1 family. Snake venom subfamily. As to quaternary structure, monomer. Expressed by the venom gland.

Its subcellular location is the secreted. Snake venom serine protease that may act in the hemostasis system of the prey. This is Snake venom serine protease PA from Trimeresurus stejnegeri (Chinese green tree viper).